A 378-amino-acid chain; its full sequence is Erythronate-4-phosphate dehydrogenase (378 aa).

Substrate-binding residues include serine 45 and threonine 66. Residues aspartate 146 and threonine 175 each contribute to the NAD(+) site. Residue arginine 208 is part of the active site. Aspartate 232 contacts NAD(+). The active site involves glutamate 237. Histidine 254 (proton donor) is an active-site residue. Glycine 257 is an NAD(+) binding site. Position 258 (tyrosine 258) interacts with substrate.

This sequence belongs to the D-isomer specific 2-hydroxyacid dehydrogenase family. PdxB subfamily. As to quaternary structure, homodimer.

It is found in the cytoplasm. It catalyses the reaction 4-phospho-D-erythronate + NAD(+) = (R)-3-hydroxy-2-oxo-4-phosphooxybutanoate + NADH + H(+). It functions in the pathway cofactor biosynthesis; pyridoxine 5'-phosphate biosynthesis; pyridoxine 5'-phosphate from D-erythrose 4-phosphate: step 2/5. Functionally, catalyzes the oxidation of erythronate-4-phosphate to 3-hydroxy-2-oxo-4-phosphonooxybutanoate. The protein is Erythronate-4-phosphate dehydrogenase of Salmonella agona (strain SL483).